The chain runs to 432 residues: MFSKLSTRGIATRIGYLAQKAASQETAAPAAGSLSETVFARENKYGAHNYHPLPVALSKGEGVFVWDVEGKRYFDYLSAYSAVNQGHCHPKIVKALTEQASKLALTSRAFYSDVLGEYEEYVTKLFGFDKVLPMNTGVEGGETACKLARKWGYLQKKIPENQAKIIFARNNFWGRTLSAVSASNDPSSYEGFGPFMPGFELIEYDNVTALEEALKDPNVCAFMVEPIQGERGVVVPSDGYLKKVRELCSKNNVLWIADEVQTGLARTGKLLAVNYEDVQPDILILGKALSGGLYPVSAVLCNDPVMLCIKPGEHGSTYGGNPLGCRVAMAALEVLQEEKLAENAFKMGELLRSELSTLPKDVVSVVRGKGLLNAIVINEKYDAWKVCLKLKENGLLAKPTHGDIIRFAPPLVIMNPRLRESIEIIKKTILSM.

Lysine 287 is subject to N6-(pyridoxal phosphate)lysine.

It belongs to the class-III pyridoxal-phosphate-dependent aminotransferase family. In terms of assembly, homotetramer. Pyridoxal 5'-phosphate serves as cofactor.

The protein localises to the mitochondrion matrix. It catalyses the reaction a 2-oxocarboxylate + L-ornithine = L-glutamate 5-semialdehyde + an L-alpha-amino acid. Its pathway is amino-acid biosynthesis; L-proline biosynthesis; L-glutamate 5-semialdehyde from L-ornithine: step 1/1. This Drosophila ananassae (Fruit fly) protein is Ornithine aminotransferase, mitochondrial (Oat).